Here is a 267-residue protein sequence, read N- to C-terminus: REH2-associated factor 2 (267 aa).

In terms of assembly, component of the REH2-associated complex (REH2C) composed of helicase REH2, associated factors H2F1 and H2F2, and mRNAs at various editing stages; the formation of the complex is RNA-independent. Interacts with various editing complexes including the RNA editing core (RECC) complex, the gRNA-binding (GRBC) complex (also known as the MRB1 complex) and the RNA editing mediator (REMC) complex.

It localises to the mitochondrion. May play a role in mitochondrial mRNA editing by facilitating the association of the gRNA-binding (GRBC) complex with the RNA editing core (RECC) complex. However, appears to be dispensable for mRNA editing per se. The chain is REH2-associated factor 2 from Trypanosoma brucei brucei (strain 927/4 GUTat10.1).